The sequence spans 242 residues: UDP-2,3-diacylglucosamine hydrolase (242 aa).

Mn(2+)-binding residues include Asp-9, His-11, Asp-42, Asn-79, and His-114. 79–80 is a binding site for substrate; sequence NR. 5 residues coordinate substrate: Asp-122, Ser-160, Asn-164, Lys-167, and His-195. His-195 and His-197 together coordinate Mn(2+).

The protein belongs to the LpxH family. Mn(2+) is required as a cofactor.

The protein localises to the cell inner membrane. The enzyme catalyses UDP-2-N,3-O-bis[(3R)-3-hydroxytetradecanoyl]-alpha-D-glucosamine + H2O = 2-N,3-O-bis[(3R)-3-hydroxytetradecanoyl]-alpha-D-glucosaminyl 1-phosphate + UMP + 2 H(+). It participates in glycolipid biosynthesis; lipid IV(A) biosynthesis; lipid IV(A) from (3R)-3-hydroxytetradecanoyl-[acyl-carrier-protein] and UDP-N-acetyl-alpha-D-glucosamine: step 4/6. Hydrolyzes the pyrophosphate bond of UDP-2,3-diacylglucosamine to yield 2,3-diacylglucosamine 1-phosphate (lipid X) and UMP by catalyzing the attack of water at the alpha-P atom. Involved in the biosynthesis of lipid A, a phosphorylated glycolipid that anchors the lipopolysaccharide to the outer membrane of the cell. The sequence is that of UDP-2,3-diacylglucosamine hydrolase from Shewanella loihica (strain ATCC BAA-1088 / PV-4).